We begin with the raw amino-acid sequence, 55 residues long: Large ribosomal subunit protein bL33 (55 aa).

Belongs to the bacterial ribosomal protein bL33 family.

This Aliivibrio fischeri (strain ATCC 700601 / ES114) (Vibrio fischeri) protein is Large ribosomal subunit protein bL33.